Reading from the N-terminus, the 570-residue chain is Putative diflavin flavoprotein A 6 (570 aa).

The interval 38–231 is zinc metallo-hydrolase; it reads AKGTTANSYL…FPTRLYATGH (194 aa). Residues 260–402 form the Flavodoxin-like domain; it reads VALIYASAYG…AGTDFAQALK (143 aa). The tract at residues 421-570 is flavodoxin-reductase-like; sequence VGRIVGSLCV…VHHRKSGNHY (150 aa).

It in the N-terminal section; belongs to the zinc metallo-hydrolase group 3 family. This sequence in the C-terminal section; belongs to the flavodoxin reductase family. Fe cation serves as cofactor.

Its function is as follows. Mediates electron transfer from NADH to oxygen, reducing it to water. This modular protein has 3 redox cofactors, in other organisms the same activity requires 2 or 3 proteins. This is Putative diflavin flavoprotein A 6 (dfa6) from Nostoc sp. (strain PCC 7120 / SAG 25.82 / UTEX 2576).